A 1438-amino-acid chain; its full sequence is DNA polymerase III PolC-type (1438 aa).

Positions 422 to 578 constitute an Exonuclease domain; that stretch reads YVVFDVETTG…YDTEATAYMF (157 aa).

The protein belongs to the DNA polymerase type-C family. PolC subfamily.

Its subcellular location is the cytoplasm. The catalysed reaction is DNA(n) + a 2'-deoxyribonucleoside 5'-triphosphate = DNA(n+1) + diphosphate. Functionally, required for replicative DNA synthesis. This DNA polymerase also exhibits 3' to 5' exonuclease activity. The polypeptide is DNA polymerase III PolC-type (Staphylococcus saprophyticus subsp. saprophyticus (strain ATCC 15305 / DSM 20229 / NCIMB 8711 / NCTC 7292 / S-41)).